The sequence spans 198 residues: Sortase D (198 aa).

Residues 7–25 traverse the membrane as a helical segment; the sequence is LFIIAAGLVIAGYGGFKLI. Basic and acidic residues predominate over residues 36–46; that stretch reads KEAKLAAKKPQ. The segment at 36-67 is disordered; sequence KEAKLAAKKPQEASGTKNSTDQAKNKASFKPE. A compositionally biased stretch (polar residues) spans 48 to 57; sequence ASGTKNSTDQ. Residue His-119 is the Proton donor/acceptor of the active site. Catalysis depends on Cys-177, which acts as the Acyl-thioester intermediate.

It belongs to the bacterial sortase family. Class D subfamily.

It localises to the cell membrane. Transpeptidase that anchors surface proteins to the cell wall. Recognizes and modifies its substrate by proteolytic cleavage of a C-terminal sorting signal. Following cleavage, a covalent intermediate is formed via a thioester bond between the sortase and its substrate, which is then transferred and covalently attached to the cell wall. This sortase recognizes a Leu-Pro-Asp-Thr-Ser/Ala (LPDTS/A) motif. It has two substrates, YhcR and YfkN. In Bacillus subtilis (strain 168), this protein is Sortase D.